A 361-amino-acid polypeptide reads, in one-letter code: Phosphoserine aminotransferase (361 aa).

Residue Arg43 coordinates L-glutamate. Residues Ala77–Ser78, Trp103, Thr153, Asp173, and Gln196 each bind pyridoxal 5'-phosphate. N6-(pyridoxal phosphate)lysine is present on Lys197. Asn238–Thr239 provides a ligand contact to pyridoxal 5'-phosphate.

This sequence belongs to the class-V pyridoxal-phosphate-dependent aminotransferase family. SerC subfamily. In terms of assembly, homodimer. The cofactor is pyridoxal 5'-phosphate.

It is found in the cytoplasm. The enzyme catalyses O-phospho-L-serine + 2-oxoglutarate = 3-phosphooxypyruvate + L-glutamate. The catalysed reaction is 4-(phosphooxy)-L-threonine + 2-oxoglutarate = (R)-3-hydroxy-2-oxo-4-phosphooxybutanoate + L-glutamate. Its pathway is amino-acid biosynthesis; L-serine biosynthesis; L-serine from 3-phospho-D-glycerate: step 2/3. Catalyzes the reversible conversion of 3-phosphohydroxypyruvate to phosphoserine and of 3-hydroxy-2-oxo-4-phosphonooxybutanoate to phosphohydroxythreonine. This Alkalihalobacillus alcalophilus (Bacillus alcalophilus) protein is Phosphoserine aminotransferase (serC).